A 156-amino-acid polypeptide reads, in one-letter code: ATP synthase subunit b (156 aa).

Residues 11-31 (AIAFVIFVWFCMKYVWPPLMA) traverse the membrane as a helical segment.

The protein belongs to the ATPase B chain family. F-type ATPases have 2 components, F(1) - the catalytic core - and F(0) - the membrane proton channel. F(1) has five subunits: alpha(3), beta(3), gamma(1), delta(1), epsilon(1). F(0) has three main subunits: a(1), b(2) and c(10-14). The alpha and beta chains form an alternating ring which encloses part of the gamma chain. F(1) is attached to F(0) by a central stalk formed by the gamma and epsilon chains, while a peripheral stalk is formed by the delta and b chains.

The protein localises to the cell inner membrane. In terms of biological role, f(1)F(0) ATP synthase produces ATP from ADP in the presence of a proton or sodium gradient. F-type ATPases consist of two structural domains, F(1) containing the extramembraneous catalytic core and F(0) containing the membrane proton channel, linked together by a central stalk and a peripheral stalk. During catalysis, ATP synthesis in the catalytic domain of F(1) is coupled via a rotary mechanism of the central stalk subunits to proton translocation. Functionally, component of the F(0) channel, it forms part of the peripheral stalk, linking F(1) to F(0). The chain is ATP synthase subunit b from Klebsiella pneumoniae (strain 342).